Reading from the N-terminus, the 233-residue chain is Orotidine 5'-phosphate decarboxylase (233 aa).

Substrate-binding positions include aspartate 11, lysine 34, 61–70 (DLKLHDIPNT), threonine 117, arginine 179, glutamine 188, glycine 208, and arginine 209. The Proton donor role is filled by lysine 63.

The protein belongs to the OMP decarboxylase family. Type 1 subfamily. As to quaternary structure, homodimer.

It carries out the reaction orotidine 5'-phosphate + H(+) = UMP + CO2. It functions in the pathway pyrimidine metabolism; UMP biosynthesis via de novo pathway; UMP from orotate: step 2/2. In terms of biological role, catalyzes the decarboxylation of orotidine 5'-monophosphate (OMP) to uridine 5'-monophosphate (UMP). In Streptococcus pneumoniae (strain P1031), this protein is Orotidine 5'-phosphate decarboxylase.